The sequence spans 447 residues: Ribulose bisphosphate carboxylase large chain (447 aa).

Positions 89 and 139 each coordinate substrate. Lysine 141 (proton acceptor) is an active-site residue. Lysine 143 contributes to the substrate binding site. Mg(2+)-binding residues include lysine 167, aspartate 169, and glutamate 170. Lysine 167 carries the N6-carboxylysine modification. Histidine 260 functions as the Proton acceptor in the catalytic mechanism. Residues arginine 261, histidine 293, and serine 345 each contribute to the substrate site.

This sequence belongs to the RuBisCO large chain family. Type I subfamily. Heterohexadecamer of 8 large chains and 8 small chains; disulfide-linked. The disulfide link is formed within the large subunit homodimers. Mg(2+) is required as a cofactor. The disulfide bond which can form in the large chain dimeric partners within the hexadecamer appears to be associated with oxidative stress and protein turnover.

The protein resides in the plastid. The protein localises to the chloroplast. It carries out the reaction 2 (2R)-3-phosphoglycerate + 2 H(+) = D-ribulose 1,5-bisphosphate + CO2 + H2O. The enzyme catalyses D-ribulose 1,5-bisphosphate + O2 = 2-phosphoglycolate + (2R)-3-phosphoglycerate + 2 H(+). In terms of biological role, ruBisCO catalyzes two reactions: the carboxylation of D-ribulose 1,5-bisphosphate, the primary event in carbon dioxide fixation, as well as the oxidative fragmentation of the pentose substrate in the photorespiration process. Both reactions occur simultaneously and in competition at the same active site. This is Ribulose bisphosphate carboxylase large chain from Convolvulus tricolor (Dwarf morning glory).